Consider the following 317-residue polypeptide: Ribosomal protein L11 methyltransferase (317 aa).

The S-adenosyl-L-methionine site is built by Thr158, Gly179, Asp201, and Asn244.

The protein belongs to the methyltransferase superfamily. PrmA family.

The protein resides in the cytoplasm. The enzyme catalyses L-lysyl-[protein] + 3 S-adenosyl-L-methionine = N(6),N(6),N(6)-trimethyl-L-lysyl-[protein] + 3 S-adenosyl-L-homocysteine + 3 H(+). In terms of biological role, methylates ribosomal protein L11. This is Ribosomal protein L11 methyltransferase from Lactococcus lactis subsp. lactis (strain IL1403) (Streptococcus lactis).